The primary structure comprises 406 residues: Sorting nexin-6 (406 aa).

Position 1 is an N-acetylmethionine (M1). M2 carries the post-translational modification N-acetylmethionine; in Sorting nexin-6, N-terminally processed. Residues M2–N179 form an interaction with PIM1 region. One can recognise a PX domain in the interval L26–L173. A 1,2-diacyl-sn-glycero-3-phospho-(1D-myo-inositol-4,5-bisphosphate)-binding positions include S41–K47, F100–K106, and E114–M117. 2 positions are modified to phosphoserine: S116 and S194. Residues E182–I199 are membrane-binding amphipathic helix. The 204-residue stretch at V203 to T406 folds into the BAR domain.

It belongs to the sorting nexin family. Forms heterodimers with BAR domain-containing sorting nexins SNX1 and SNX2. The heterodimers are proposed to self-assemble into helical arrays on the membrane to stabilize and expand local membrane curvature underlying endosomal tubule formation. Thought to be a component of the originally described retromer complex (also called SNX-BAR retromer) which is a pentamer containing the heterotrimeric retromer cargo-selective complex (CSC), also described as vacuolar protein sorting subcomplex (VPS), and a heterodimeric membrane-deforming subcomplex formed between SNX1 or SNX2 and SNX5 or SNX6 (also called SNX-BAR subcomplex); the respective CSC and SNX-BAR subcomplexes associate with low affinity. Interacts with SNX1, SNX2, VPS26A, VPS29, VPS35, CDKN1B, TGFB receptors, BACE1, BRMS1, PIP5K1C isoform 3. Interacts with DCTN1; the association with DCTN1 is involved in movement of retromer-c ontaining vesicles toward the TGN. Interacts with CDKN1B and GIT1. Interacts with PIM1; translocating SNX6 to the nucleus. In terms of processing, in vitro phosphorylated by PIM1; not affecting PIM1-dependent nuclear translocation.

It is found in the early endosome. Its subcellular location is the early endosome membrane. The protein localises to the cytoplasmic vesicle. The protein resides in the cytoplasm. It localises to the nucleus. Functionally, involved in several stages of intracellular trafficking. Interacts with membranes phosphatidylinositol 3,4-bisphosphate and/or phosphatidylinositol 4,5-bisphosphate. Acts in part as component of the retromer membrane-deforming SNX-BAR subcomplex. The SNX-BAR retromer mediates retrograde transport of cargo proteins from endosomes to the trans-Golgi network (TGN) and is involved in endosome-to-plasma membrane transport for cargo protein recycling. The SNX-BAR subcomplex functions to deform the donor membrane into a tubular profile called endosome-to-TGN transport carrier (ETC). Does not have in vitro vesicle-to-membrane remodeling activity. Involved in retrograde endosome-to-TGN transport of lysosomal enzyme receptor IGF2R. May function as link between transport vesicles and dynactin. Negatively regulates retrograde transport of BACE1 from the cell surface to the trans-Golgi network. Involved in E-cadherin sorting and degradation; inhibits PIP5K1C isoform 3-mediated E-cadherin degradation. In association with GIT1 involved in EGFR degradation. Promotes lysosomal degradation of CDKN1B. May contribute to transcription regulation. In Homo sapiens (Human), this protein is Sorting nexin-6 (SNX6).